Here is a 108-residue protein sequence, read N- to C-terminus: Peptidyl-prolyl cis-trans isomerase FKBP1A (108 aa).

One can recognise a PPIase FKBP-type domain in the interval 20-108; the sequence is GQTCVVHYTG…VFDVELLKLE (89 aa). K53 bears the N6-acetyllysine; alternate mark. At K53 the chain carries N6-succinyllysine; alternate.

Belongs to the FKBP-type PPIase family. FKBP1 subfamily. In terms of assembly, interacts with TGFBR1; prevents TGFBR1 phosphorylation by TGFBR2 and stabilizes it in the inactive conformation. Interacts with ACVR1B and SMAD7. Identified in a complex composed of RYR1, PDE4D, PKA, FKBP1A and protein phosphatase 1 (PP1). Interacts directly with RYR2 and RYR3. Interacts directly with RYR1. Interacts with GLMN; rapamycin and FK506 abolish the interaction with GLMN in a dose dependent manner.

The protein localises to the cytoplasm. It localises to the cytosol. The protein resides in the sarcoplasmic reticulum membrane. The catalysed reaction is [protein]-peptidylproline (omega=180) = [protein]-peptidylproline (omega=0). With respect to regulation, inhibited by both FK506 and rapamycin. Functionally, keeps in an inactive conformation TGFBR1, the TGF-beta type I serine/threonine kinase receptor, preventing TGF-beta receptor activation in absence of ligand. Recruits SMAD7 to ACVR1B which prevents the association of SMAD2 and SMAD3 with the activin receptor complex, thereby blocking the activin signal. May modulate the RYR1 calcium channel activity. PPIases accelerate the folding of proteins. It catalyzes the cis-trans isomerization of proline imidic peptide bonds in oligopeptides. In Mus musculus (Mouse), this protein is Peptidyl-prolyl cis-trans isomerase FKBP1A (Fkbp1a).